The sequence spans 415 residues: Phosphoglycerate kinase (415 aa).

Positions 22, 23, 24, 25, 37, 38, 61, 62, 64, 65, 121, 168, and 169 each coordinate (2R)-3-phosphoglycerate. Gly212 lines the ADP pocket. Position 212 (Gly212) interacts with CDP. Residues Ala213 and Lys214 each contribute to the AMP site. Ala213 is an ATP binding site. Ala213 contributes to the Mg(2+) binding site. Residues Ala216 and Asp217 each coordinate Mg(2+). Asp217 is a binding site for CDP. Position 218 (Lys218) interacts with AMP. Lys218 lines the ATP pocket. An ADP-binding site is contributed by Gly236. Residue Gly236 participates in CDP binding. AMP is bound by residues Gly237 and Gly311. ATP contacts are provided by Gly237 and Gly311. The CDP site is built by Gly336 and Phe341. Phe341 contributes to the ADP binding site. Glu342 is a binding site for AMP. Residues Glu342, Asp373, and Thr374 each contribute to the ATP site. Asp373 lines the Mg(2+) pocket.

It belongs to the phosphoglycerate kinase family. As to quaternary structure, monomer. Mg(2+) serves as cofactor.

The protein resides in the cytoplasm. The catalysed reaction is (2R)-3-phosphoglycerate + ATP = (2R)-3-phospho-glyceroyl phosphate + ADP. Its pathway is carbohydrate degradation; glycolysis; pyruvate from D-glyceraldehyde 3-phosphate: step 2/5. Its function is as follows. Enzyme of the glycolytic pathway. Glycolysis is essential in glial cells but not in neurons; neurons rely on the citric acid cycle for their energy needs, and on lactate and alanine secreted into the hemolymph by glial cells to fuel it. The polypeptide is Phosphoglycerate kinase (Drosophila melanogaster (Fruit fly)).